The primary structure comprises 483 residues: tRNA sulfurtransferase (483 aa).

The THUMP domain maps to 61-165 (PLVADALTLI…NDRLLLITER (105 aa)). ATP is bound by residues 183 to 184 (LI), K265, G287, and Q296. Residues C344 and C457 are joined by a disulfide bond. In terms of domain architecture, Rhodanese spans 405 to 483 (LGSGDVVLDI…GFQNVKVYRP (79 aa)). C457 functions as the Cysteine persulfide intermediate in the catalytic mechanism.

It belongs to the ThiI family.

The protein resides in the cytoplasm. It catalyses the reaction [ThiI sulfur-carrier protein]-S-sulfanyl-L-cysteine + a uridine in tRNA + 2 reduced [2Fe-2S]-[ferredoxin] + ATP + H(+) = [ThiI sulfur-carrier protein]-L-cysteine + a 4-thiouridine in tRNA + 2 oxidized [2Fe-2S]-[ferredoxin] + AMP + diphosphate. It carries out the reaction [ThiS sulfur-carrier protein]-C-terminal Gly-Gly-AMP + S-sulfanyl-L-cysteinyl-[cysteine desulfurase] + AH2 = [ThiS sulfur-carrier protein]-C-terminal-Gly-aminoethanethioate + L-cysteinyl-[cysteine desulfurase] + A + AMP + 2 H(+). Its pathway is cofactor biosynthesis; thiamine diphosphate biosynthesis. Its function is as follows. Catalyzes the ATP-dependent transfer of a sulfur to tRNA to produce 4-thiouridine in position 8 of tRNAs, which functions as a near-UV photosensor. Also catalyzes the transfer of sulfur to the sulfur carrier protein ThiS, forming ThiS-thiocarboxylate. This is a step in the synthesis of thiazole, in the thiamine biosynthesis pathway. The sulfur is donated as persulfide by IscS. In Sodalis glossinidius (strain morsitans), this protein is tRNA sulfurtransferase.